The chain runs to 485 residues: Proline--tRNA ligase (485 aa).

The protein belongs to the class-II aminoacyl-tRNA synthetase family. ProS type 3 subfamily. Homodimer.

The protein localises to the cytoplasm. It carries out the reaction tRNA(Pro) + L-proline + ATP = L-prolyl-tRNA(Pro) + AMP + diphosphate. Catalyzes the attachment of proline to tRNA(Pro) in a two-step reaction: proline is first activated by ATP to form Pro-AMP and then transferred to the acceptor end of tRNA(Pro). The polypeptide is Proline--tRNA ligase (Aeropyrum pernix (strain ATCC 700893 / DSM 11879 / JCM 9820 / NBRC 100138 / K1)).